The primary structure comprises 104 residues: Large ribosomal subunit protein bL21 (104 aa).

It belongs to the bacterial ribosomal protein bL21 family. In terms of assembly, part of the 50S ribosomal subunit. Contacts protein L20.

This protein binds to 23S rRNA in the presence of protein L20. This chain is Large ribosomal subunit protein bL21, found in Francisella philomiragia subsp. philomiragia (strain ATCC 25017 / CCUG 19701 / FSC 153 / O#319-036).